Reading from the N-terminus, the 87-residue chain is Large ribosomal subunit protein bL27 (87 aa).

This sequence belongs to the bacterial ribosomal protein bL27 family.

The chain is Large ribosomal subunit protein bL27 from Pseudarthrobacter chlorophenolicus (strain ATCC 700700 / DSM 12829 / CIP 107037 / JCM 12360 / KCTC 9906 / NCIMB 13794 / A6) (Arthrobacter chlorophenolicus).